The chain runs to 116 residues: MKKEILEVFDNTFPGRDYTIEIVNPEFTSVCPITALPDFGTIIIRYIPDKSCVELKSLKYYFLEFRNAGIFYENITNTILDDLTSVLQPREMTVITQWKARGGITETVSVTWPQKQ.

Residue C31 is the Thioimide intermediate of the active site. The active-site Proton donor is the D38. Residues 53–55 and 72–73 each bind substrate; these read VEL and YE.

This sequence belongs to the GTP cyclohydrolase I family. QueF type 1 subfamily.

The protein localises to the cytoplasm. The catalysed reaction is 7-aminomethyl-7-carbaguanine + 2 NADP(+) = 7-cyano-7-deazaguanine + 2 NADPH + 3 H(+). Its pathway is tRNA modification; tRNA-queuosine biosynthesis. Catalyzes the NADPH-dependent reduction of 7-cyano-7-deazaguanine (preQ0) to 7-aminomethyl-7-deazaguanine (preQ1). This is NADPH-dependent 7-cyano-7-deazaguanine reductase from Chlorobium phaeobacteroides (strain DSM 266 / SMG 266 / 2430).